The chain runs to 394 residues: Gastricsin (394 aa).

Positions 1 to 16 (MKWMVVVLLCLPLLEA) are cleaved as a signal peptide. The propeptide at 17 to 65 (TQIKVPLKKIKSIREVLREKGLLGDFLKNHKPQHARKFFRNRLAKTGDF) is activation peptide. In terms of domain architecture, Peptidase A1 spans 79 to 391 (YFGQISLGTP…DLANNRVGFA (313 aa)). Aspartate 97 is an active-site residue. 2 disulfide bridges follow: cysteine 110/cysteine 115 and cysteine 273/cysteine 277. Residue threonine 283 is part of the active site. Cysteine 316 and cysteine 349 form a disulfide bridge.

This sequence belongs to the peptidase A1 family.

The protein localises to the secreted. The enzyme catalyses More restricted specificity than pepsin A, but shows preferential cleavage at Tyr-|-Xaa bonds. High activity on hemoglobin.. Hydrolyzes a variety of proteins. In Cavia porcellus (Guinea pig), this protein is Gastricsin (PGC).